Reading from the N-terminus, the 346-residue chain is tRNA N6-adenosine threonylcarbamoyltransferase (346 aa).

The Fe cation site is built by H111 and H115. Residues 134 to 138, D167, G180, and N279 contribute to the substrate site; that span reads LVSGG. A Fe cation-binding site is contributed by D307.

It belongs to the KAE1 / TsaD family. It depends on Fe(2+) as a cofactor.

The protein resides in the cytoplasm. It carries out the reaction L-threonylcarbamoyladenylate + adenosine(37) in tRNA = N(6)-L-threonylcarbamoyladenosine(37) in tRNA + AMP + H(+). Its function is as follows. Required for the formation of a threonylcarbamoyl group on adenosine at position 37 (t(6)A37) in tRNAs that read codons beginning with adenine. Is involved in the transfer of the threonylcarbamoyl moiety of threonylcarbamoyl-AMP (TC-AMP) to the N6 group of A37, together with TsaE and TsaB. TsaD likely plays a direct catalytic role in this reaction. In Burkholderia mallei (strain ATCC 23344), this protein is tRNA N6-adenosine threonylcarbamoyltransferase.